A 424-amino-acid chain; its full sequence is MFVDRAEVFVKSGSGGNGSVSFRREKYVPRGGPDGGDGGKGGDVILVVDPEITTLLDFSYKKKYVAEKGENGSGSKCFGKNGENLYIKVPLGTVIRDVDTNKIMADLSHIGDKYIVAKGGKGGRGNVRFTTAVRQAPDFAEPGMPGEERYISLELKILADVGLLGFPNVGKSTLLSVVTKAAPKIANYHFTTLSPNLGVVNIPGIQSFVIADIPGIIEGAAEGVGLGIDFLRHIERTRLLIHIVDISGLEGRDPFGDFIKINEELKKYDVKLWDRPQIIAANKADMLYDDSIFQDFKKKVENLGYNKVFKISAATRQGVEELMKEAAAMLTNIPVTDMHISEEDKFIPEEKRFTYEIEKQGNVYVVKGSFVDRLLASINVNDANELRYFHKVLQNKGVMKQLIDMGIKDGDVVRLNDFEFDYIL.

Residues 1–158 (MFVDRAEVFV…RYISLELKIL (158 aa)) form the Obg domain. The segment at 21–42 (SFRREKYVPRGGPDGGDGGKGG) is disordered. A compositionally biased stretch (gly residues) spans 32 to 42 (GPDGGDGGKGG). An OBG-type G domain is found at 159-331 (ADVGLLGFPN…LMKEAAAMLT (173 aa)). Residues 165–172 (GFPNVGKS), 190–194 (FTTLS), 212–215 (DIPG), 282–285 (NKAD), and 312–314 (SAA) contribute to the GTP site. 2 residues coordinate Mg(2+): Ser-172 and Thr-192. Residues 345–424 (KFIPEEKRFT…LNDFEFDYIL (80 aa)) form the OCT domain.

Belongs to the TRAFAC class OBG-HflX-like GTPase superfamily. OBG GTPase family. As to quaternary structure, monomer. The cofactor is Mg(2+).

It localises to the cytoplasm. Functionally, an essential GTPase which binds GTP, GDP and possibly (p)ppGpp with moderate affinity, with high nucleotide exchange rates and a fairly low GTP hydrolysis rate. Plays a role in control of the cell cycle, stress response, ribosome biogenesis and in those bacteria that undergo differentiation, in morphogenesis control. This chain is GTPase Obg, found in Clostridium kluyveri (strain NBRC 12016).